We begin with the raw amino-acid sequence, 446 residues long: MANVIVIGAQWGDEGKGKITDLLSRSADVVVRPQGGVNAGHTIVVQGQTFKLHLIPSGILYPETECIIGSGTVIDPKVLLEELGQLKSLNVATDNLFISQTAHITMPYHRLFDQASEQRRGEKKIGTTGRGIGPTYADKSERTGIRVVDLMNPDELQEKLEWTINYKNVILEKLYNLDPLDPKVVIEEYINYADQLRPYVIDSSLKIYEAIQERKNILFEGAQGTLLDLDHGTYPYVTSSNPIAGGACVGSGIGPTVIDRVIGVAKAYTTRVGEGPFPTELHGDIGQQLCDRGAEFGTTTGRRRRCGWFDAVIGRYAVRVNGLDCLAITKLDVLDELAEIKVCTAYELDGQTCHHFPSNASEFARCTPIYETLPGWQQSTENCRSLEDLPKEALDYLKFLAELMEVSIAIVSLGASRDQTIIVEDPIHGPKRALLDENGDPVTTHE.

GTP is bound by residues 12–18 (GDEGKGK) and 40–42 (GHT). Residue Asp13 is the Proton acceptor of the active site. Mg(2+)-binding residues include Asp13 and Gly40. IMP-binding positions include 13 to 16 (DEGK), 38 to 41 (NAGH), Thr128, Arg142, Gln223, Thr238, and Arg302. His41 acts as the Proton donor in catalysis. Position 298 to 304 (298 to 304 (TTTGRRR)) interacts with substrate. GTP contacts are provided by residues Arg304, 330–332 (KLD), and 412–414 (SLG).

Belongs to the adenylosuccinate synthetase family. As to quaternary structure, homodimer. Mg(2+) is required as a cofactor.

It localises to the cytoplasm. It carries out the reaction IMP + L-aspartate + GTP = N(6)-(1,2-dicarboxyethyl)-AMP + GDP + phosphate + 2 H(+). The protein operates within purine metabolism; AMP biosynthesis via de novo pathway; AMP from IMP: step 1/2. Plays an important role in the de novo pathway of purine nucleotide biosynthesis. Catalyzes the first committed step in the biosynthesis of AMP from IMP. The polypeptide is Adenylosuccinate synthetase (Crocosphaera subtropica (strain ATCC 51142 / BH68) (Cyanothece sp. (strain ATCC 51142))).